The following is a 360-amino-acid chain: Peptide chain release factor 1 (360 aa).

Position 234 is an N5-methylglutamine (glutamine 234).

It belongs to the prokaryotic/mitochondrial release factor family. In terms of processing, methylated by PrmC. Methylation increases the termination efficiency of RF1.

The protein resides in the cytoplasm. Its function is as follows. Peptide chain release factor 1 directs the termination of translation in response to the peptide chain termination codons UAG and UAA. This chain is Peptide chain release factor 1, found in Clostridium botulinum (strain Alaska E43 / Type E3).